Here is a 208-residue protein sequence, read N- to C-terminus: Uracil phosphoribosyltransferase (208 aa).

5-phospho-alpha-D-ribose 1-diphosphate-binding positions include R78, R103, and 130–138 (DPMLATGGS). Uracil is bound by residues I193 and 198–200 (GDA). Position 199 (D199) interacts with 5-phospho-alpha-D-ribose 1-diphosphate.

This sequence belongs to the UPRTase family. It depends on Mg(2+) as a cofactor.

It carries out the reaction UMP + diphosphate = 5-phospho-alpha-D-ribose 1-diphosphate + uracil. The protein operates within pyrimidine metabolism; UMP biosynthesis via salvage pathway; UMP from uracil: step 1/1. With respect to regulation, allosterically activated by GTP. In terms of biological role, catalyzes the conversion of uracil and 5-phospho-alpha-D-ribose 1-diphosphate (PRPP) to UMP and diphosphate. This Aliivibrio salmonicida (strain LFI1238) (Vibrio salmonicida (strain LFI1238)) protein is Uracil phosphoribosyltransferase.